The sequence spans 1234 residues: Transcription-repair-coupling factor (1234 aa).

In terms of domain architecture, Helicase ATP-binding spans 663–824; sequence DMEKPIPMDR…LAGIREMSTI (162 aa). 676–683 is an ATP binding site; the sequence is GDVGYGKT. A DEEQ box motif is present at residues 777–780; sequence DEEQ. The Helicase C-terminal domain maps to 842-999; sequence DDKQIAAALR…GMAVALKDLE (158 aa). Residues 1207–1234 are disordered; it reads RQHIGITNPSPPGEDGRGRNTTIKERQP. The segment covering 1220 to 1234 has biased composition (basic and acidic residues); the sequence is EDGRGRNTTIKERQP.

This sequence in the N-terminal section; belongs to the UvrB family. It in the C-terminal section; belongs to the helicase family. RecG subfamily.

The protein localises to the cytoplasm. Couples transcription and DNA repair by recognizing RNA polymerase (RNAP) stalled at DNA lesions. Mediates ATP-dependent release of RNAP and its truncated transcript from the DNA, and recruitment of nucleotide excision repair machinery to the damaged site. This chain is Transcription-repair-coupling factor, found in Mycobacterium bovis (strain ATCC BAA-935 / AF2122/97).